Here is a 244-residue protein sequence, read N- to C-terminus: Adenosine 5'-phosphosulfate reductase (244 aa).

The [4Fe-4S] cluster site is built by Cys129, Cys130, Cys212, and Cys215. Residue Cys240 is the Nucleophile; cysteine thiosulfonate intermediate of the active site.

It belongs to the PAPS reductase family. CysH subfamily. The cofactor is [4Fe-4S] cluster.

The protein localises to the cytoplasm. The enzyme catalyses [thioredoxin]-disulfide + sulfite + AMP + 2 H(+) = adenosine 5'-phosphosulfate + [thioredoxin]-dithiol. It participates in sulfur metabolism; hydrogen sulfide biosynthesis; sulfite from sulfate. Catalyzes the formation of sulfite from adenosine 5'-phosphosulfate (APS) using thioredoxin as an electron donor. In Neisseria meningitidis serogroup A / serotype 4A (strain DSM 15465 / Z2491), this protein is Adenosine 5'-phosphosulfate reductase.